The primary structure comprises 462 residues: MESREDSFISKEKKSTMKKEKQAIASQRNRRRVIKNRGNGKRLIASLSQRKRRRIPRGRGNEKAVFAPSSLPNDVVEEIFLRLPVKAIIQLKSLSKQWRSTIESRSFEERHLKIVERSRVDFPQVMVMSEEYSLKGSKGNQPRPDTDIGFSTICLESASILSSTLITFPQGFQHRIYASESCDGLFCIHSLKTQAIYVVNPATRWFRQLPPARFQILMQKLYPTQDTWIDIKPVVCYTAFVKANDYKLVWLYNSDASNPNLGVTKCEVFDFRANAWRYLTCTPSYRIFPDQVPAATNGSIYWFTEPYNGEIKVVALDIHTETFRVLPKINPAIASSDPDHIDMCTLDNGLCMSKRESDTLVQEIWRLKSSEDSWEKVYTIDLLSCSSSSLSEFRDGFNWTRKDLVEPSTPVAICKDKKILLSHRYARNMIKYDPQIKSISLIYQPPLCRRYASYFQSLISHI.

Residues 1-22 (MESREDSFISKEKKSTMKKEKQ) are compositionally biased toward basic and acidic residues. Residues 1-59 (MESREDSFISKEKKSTMKKEKQAIASQRNRRRVIKNRGNGKRLIASLSQRKRRRIPRGR) form a disordered region. Positions 28–40 (RNRRRVIKNRGNG) are enriched in basic residues. The 46-residue stretch at 65 to 110 (VFAPSSLPNDVVEEIFLRLPVKAIIQLKSLSKQWRSTIESRSFEER) folds into the F-box domain.

This chain is Putative F-box protein At1g12855, found in Arabidopsis thaliana (Mouse-ear cress).